Reading from the N-terminus, the 313-residue chain is S-methyl-5'-thioadenosine phosphorylase (313 aa).

Phosphate is bound by residues threonine 20, 68-69 (RH), and 101-102 (SA). Methionine 203 is a substrate binding site. Serine 204 provides a ligand contact to phosphate. 227–229 (DYD) is a substrate binding site.

Belongs to the PNP/MTAP phosphorylase family. MTAP subfamily. Homotrimer.

It localises to the cytoplasm. It is found in the nucleus. The enzyme catalyses S-methyl-5'-thioadenosine + phosphate = 5-(methylsulfanyl)-alpha-D-ribose 1-phosphate + adenine. It participates in amino-acid biosynthesis; L-methionine biosynthesis via salvage pathway; S-methyl-5-thio-alpha-D-ribose 1-phosphate from S-methyl-5'-thioadenosine (phosphorylase route): step 1/1. In terms of biological role, catalyzes the reversible phosphorylation of S-methyl-5'-thioadenosine (MTA) to adenine and 5-methylthioribose-1-phosphate. Involved in the breakdown of MTA, a major by-product of polyamine biosynthesis. Responsible for the first step in the methionine salvage pathway after MTA has been generated from S-adenosylmethionine. Has broad substrate specificity with 6-aminopurine nucleosides as preferred substrates. The chain is S-methyl-5'-thioadenosine phosphorylase from Ajellomyces capsulatus (strain G186AR / H82 / ATCC MYA-2454 / RMSCC 2432) (Darling's disease fungus).